We begin with the raw amino-acid sequence, 660 residues long: Genome-linked protein precursor (660 aa).

A signal peptide spans 1–25; the sequence is MALLGIKLMTLVFAAWLSCCHSSSA. The next 2 membrane-spanning stretches (helical) occupy residues 131–151 and 165–185; these read AVGM…LVVY and AVCV…ISWI. Residues 224–416 form the Peptidase S39 domain; it reads VEGYKPFIIP…GLTSPDFKFE (193 aa). Catalysis depends on for protease activity residues His272, Asp304, and Ser373. Disordered stretches follow at residues 463 to 490 and 595 to 660; these read EEES…GCPP and TKAP…AWVR.

This sequence belongs to the peptidase S39B family.

It is found in the host membrane. In terms of biological role, precursor from which the VPg molecule is probably released at the onset of the RNA synthesis. Essential for virus replication. The protein is Genome-linked protein precursor of Euphorbia pulcherrima (Poinsettia).